Reading from the N-terminus, the 1205-residue chain is Nitric oxide synthase 3 (1205 aa).

Positions methionine 1 to valine 73 are disordered. Residue glycine 2 is the site of N-myristoyl glycine attachment. Residues cysteine 15 and cysteine 26 are each lipidated (S-palmitoyl cysteine). The segment covering cysteine 15–glycine 27 has biased composition (gly residues). Over residues leucine 44–proline 54 the composition is skewed to pro residues. The Zn(2+) site is built by cysteine 96 and cysteine 101. An interaction with NOSIP region spans residues arginine 100–lysine 488. Serine 104 lines the (6R)-L-erythro-5,6,7,8-tetrahydrobiopterin pocket. At serine 116 the chain carries Phosphoserine; by CDK5. Cysteine 186 is a binding site for heme b. Residues glutamine 249, tryptophan 358, tyrosine 359, glutamate 363, and asparagine 368 each coordinate L-arginine. The (6R)-L-erythro-5,6,7,8-tetrahydrobiopterin site is built by alanine 448, tryptophan 449, and phenylalanine 462. A heme b-binding site is contributed by tyrosine 477. The segment at valine 492–methionine 512 is calmodulin-binding. The residue at position 497 (threonine 497) is a Phosphothreonine; by AMPK. Residues alanine 522 to phenylalanine 705 form the Flavodoxin-like domain. FMN is bound by residues serine 528, glutamate 529, threonine 530, arginine 532, serine 574, and threonine 575. Serine 617, serine 635, and serine 640 each carry phosphoserine. Serine 656, cysteine 663, glutamate 689, and glutamine 693 together coordinate FMN. Positions arginine 758–proline 1004 constitute an FAD-binding FR-type domain. Residue arginine 778 coordinates NADP(+). Position 800 (histidine 800) interacts with FAD. The interval valine 819–proline 850 is disordered. The residue at position 838 (serine 838) is a Phosphoserine. 9 residues coordinate FAD: arginine 940, tyrosine 942, serine 943, threonine 958, alanine 960, tyrosine 964, valine 977, cysteine 978, and serine 979. NADP(+) contacts are provided by threonine 1018, arginine 1051, serine 1080, arginine 1081, lysine 1087, tyrosine 1089, and glutamine 1091. At threonine 1177 the chain carries Phosphothreonine. Serine 1179 carries the post-translational modification Phosphoserine; by AMPK. Residue serine 1181 is modified to Phosphoserine.

This sequence belongs to the NOS family. In terms of assembly, homodimer. Interacts with NOSIP and NOSTRIN. Interacts with HSP90AB1. Forms a complex with ASL, ASS1 and SLC7A1; the complex regulates cell-autonomous L-arginine synthesis and citrulline recycling while channeling extracellular L-arginine to nitric oxide synthesis pathway. Heme b is required as a cofactor. FAD serves as cofactor. The cofactor is FMN. It depends on (6R)-L-erythro-5,6,7,8-tetrahydrobiopterin as a cofactor. Post-translationally, phosphorylation by AMPK at Ser-1179 in the presence of Ca(2+)-calmodulin (CaM) activates activity. In absence of Ca(2+)-calmodulin, AMPK also phosphorylates Thr-497, resulting in inhibition of activity. Phosphorylation of Ser-116 by CDK5 reduces activity.

It localises to the membrane. The protein localises to the caveola. The protein resides in the cytoplasm. Its subcellular location is the cytoskeleton. It is found in the golgi apparatus. It localises to the cell membrane. The catalysed reaction is 2 L-arginine + 3 NADPH + 4 O2 + H(+) = 2 L-citrulline + 2 nitric oxide + 3 NADP(+) + 4 H2O. With respect to regulation, stimulated by calcium/calmodulin. Inhibited by NOSIP and NOSTRIN. Functionally, produces nitric oxide (NO) which is implicated in vascular smooth muscle relaxation through a cGMP-mediated signal transduction pathway. NO mediates vascular endothelial growth factor (VEGF)-induced angiogenesis in coronary vessels and promotes blood clotting through the activation of platelets. The sequence is that of Nitric oxide synthase 3 (NOS3) from Canis lupus familiaris (Dog).